Reading from the N-terminus, the 346-residue chain is UDP-N-acetylenolpyruvoylglucosamine reductase (346 aa).

The FAD-binding PCMH-type domain maps to 17–187; sequence IESQAYALIE…VAVGFTLKKE (171 aa). The active site involves Arg-163. The active-site Proton donor is Ser-233. Glu-329 is an active-site residue.

This sequence belongs to the MurB family. FAD serves as cofactor.

It is found in the cytoplasm. The catalysed reaction is UDP-N-acetyl-alpha-D-muramate + NADP(+) = UDP-N-acetyl-3-O-(1-carboxyvinyl)-alpha-D-glucosamine + NADPH + H(+). It participates in cell wall biogenesis; peptidoglycan biosynthesis. In terms of biological role, cell wall formation. In Photobacterium profundum (strain SS9), this protein is UDP-N-acetylenolpyruvoylglucosamine reductase.